The following is a 111-amino-acid chain: Large ribosomal subunit protein uL22 (111 aa).

This sequence belongs to the universal ribosomal protein uL22 family. In terms of assembly, part of the 50S ribosomal subunit.

Its function is as follows. This protein binds specifically to 23S rRNA; its binding is stimulated by other ribosomal proteins, e.g. L4, L17, and L20. It is important during the early stages of 50S assembly. It makes multiple contacts with different domains of the 23S rRNA in the assembled 50S subunit and ribosome. Functionally, the globular domain of the protein is located near the polypeptide exit tunnel on the outside of the subunit, while an extended beta-hairpin is found that lines the wall of the exit tunnel in the center of the 70S ribosome. This is Large ribosomal subunit protein uL22 from Clostridium kluyveri (strain NBRC 12016).